Here is a 156-residue protein sequence, read N- to C-terminus: 2-C-methyl-D-erythritol 2,4-cyclodiphosphate synthase (156 aa).

Residues D9 and H11 each contribute to the a divalent metal cation site. Residues 9–11 (DAH) and 36–37 (HS) each bind 4-CDP-2-C-methyl-D-erythritol 2-phosphate. An a divalent metal cation-binding site is contributed by H44. 58–60 (NIG) is a 4-CDP-2-C-methyl-D-erythritol 2-phosphate binding site.

The protein belongs to the IspF family. As to quaternary structure, homotrimer. It depends on a divalent metal cation as a cofactor.

It carries out the reaction 4-CDP-2-C-methyl-D-erythritol 2-phosphate = 2-C-methyl-D-erythritol 2,4-cyclic diphosphate + CMP. Its pathway is isoprenoid biosynthesis; isopentenyl diphosphate biosynthesis via DXP pathway; isopentenyl diphosphate from 1-deoxy-D-xylulose 5-phosphate: step 4/6. Its function is as follows. Involved in the biosynthesis of isopentenyl diphosphate (IPP) and dimethylallyl diphosphate (DMAPP), two major building blocks of isoprenoid compounds. Catalyzes the conversion of 4-diphosphocytidyl-2-C-methyl-D-erythritol 2-phosphate (CDP-ME2P) to 2-C-methyl-D-erythritol 2,4-cyclodiphosphate (ME-CPP) with a corresponding release of cytidine 5-monophosphate (CMP). This chain is 2-C-methyl-D-erythritol 2,4-cyclodiphosphate synthase, found in Kosmotoga olearia (strain ATCC BAA-1733 / DSM 21960 / TBF 19.5.1).